The primary structure comprises 201 residues: Large ribosomal subunit protein uL18 (201 aa).

Belongs to the universal ribosomal protein uL18 family. In terms of assembly, part of the 50S ribosomal subunit. Contacts the 5S and 23S rRNAs.

In terms of biological role, this is one of the proteins that bind and probably mediate the attachment of the 5S RNA into the large ribosomal subunit, where it forms part of the central protuberance. In Thermococcus onnurineus (strain NA1), this protein is Large ribosomal subunit protein uL18.